The sequence spans 289 residues: Mas-related G-protein coupled receptor member G (289 aa).

Topologically, residues 1–13 are extracellular; it reads MLSIFNIWGTFNR. A helical transmembrane segment spans residues 14 to 34; it reads VLFFLSLTVSLAGLAGNTLLL. At 35–49 the chain is on the cytoplasmic side; sequence WHLGLRIKKGPFNTY. Residues 50 to 70 form a helical membrane-spanning segment; the sequence is LLHLAAADFLFLSCQVGFSIA. Topologically, residues 71 to 80 are extracellular; the sequence is KIASGYEDTL. The helical transmembrane segment at 81–101 threads the bilayer; sequence YFPVTFLWFAVGLWLLAAFIV. The Cytoplasmic segment spans residues 102–123; it reads DCCLSYMFPSFCGPNCRPRYTS. The helical transmembrane segment at 124-144 threads the bilayer; that stretch reads FVLCLVIWALTMLAVLLPANA. Topologically, residues 145-164 are extracellular; that stretch reads CGLLYNRMSLLVCLKYHWVS. Residues 165-185 form a helical membrane-spanning segment; the sequence is VVWLGVLASTACGASMFLLVF. Residues 186–200 lie on the Cytoplasmic side of the membrane; that stretch reads GNCCSSQPPSKFCKL. Residues 201–221 traverse the membrane as a helical segment; it reads AQCSGILLFFCRLPLVFYWCL. Residue Arg-222 is a topological domain, extracellular. A helical transmembrane segment spans residues 223–243; it reads PVIKFLLPFFFPLATLLACID. Residues 244-289 lie on the Cytoplasmic side of the membrane; sequence SSAKPLLYYLKGRQLRKEPLQVALNRALGEESQSSSGGISLPMSRV.

This sequence belongs to the G-protein coupled receptor 1 family. Mas subfamily.

The protein localises to the cell membrane. Functionally, orphan receptor. May regulate nociceptor function and/or development, including the sensation or modulation of pain. This chain is Mas-related G-protein coupled receptor member G (Mrgprg), found in Rattus norvegicus (Rat).